The primary structure comprises 244 residues: Probable transcriptional regulatory protein DR_2548 (244 aa).

A disordered region spans residues 1–23 (MAGHSKWAQIKRKKGANDKKRSA).

This sequence belongs to the TACO1 family.

Its subcellular location is the cytoplasm. This is Probable transcriptional regulatory protein DR_2548 from Deinococcus radiodurans (strain ATCC 13939 / DSM 20539 / JCM 16871 / CCUG 27074 / LMG 4051 / NBRC 15346 / NCIMB 9279 / VKM B-1422 / R1).